A 314-amino-acid polypeptide reads, in one-letter code: BTB/POZ domain-containing adapter for CUL3-mediated RhoA degradation protein 2 (314 aa).

The BTB domain maps to Lys-32 to Lys-100.

The protein belongs to the BACURD family. As to quaternary structure, component of the BCR(TNFAIP1) E3 ubiquitin ligase complex, at least composed of CUL3, TNFAIP1/BACURD2 and RBX1.

The protein localises to the cytoplasm. It is found in the nucleus. The protein resides in the endosome. Its pathway is protein modification; protein ubiquitination. Functionally, substrate-specific adapter of a BCR (BTB-CUL3-RBX1) E3 ubiquitin-protein ligase complex involved in regulation of cytoskeleton structure. The BCR(TNFAIP1) E3 ubiquitin ligase complex mediates the ubiquitination of target proteins, leading to their degradation by the proteasome. In Gallus gallus (Chicken), this protein is BTB/POZ domain-containing adapter for CUL3-mediated RhoA degradation protein 2 (TNFAIP1).